Reading from the N-terminus, the 1047-residue chain is Suppression of tumorigenicity 18 protein (1047 aa).

3 disordered regions span residues 41 to 92 (TAED…HSTA), 168 to 221 (FLIH…VPKY), and 251 to 286 (DSET…SESL). Residues 52 to 65 (NKRKSLLMKPRHYS) show a composition bias toward basic residues. Over residues 171–181 (HSDDGRDKIDD) the composition is skewed to basic and acidic residues. CCHHC-type zinc fingers lie at residues 359-402 (PRPE…PLEI) and 403-446 (LAMH…KLAM). Zn(2+) contacts are provided by Cys368, Cys373, His386, Cys392, Cys412, Cys417, His430, and Cys436. Disordered regions lie at residues 523–563 (GRKT…SYSY) and 672–710 (YSKT…SPKP). A compositionally biased stretch (polar residues) spans 550-563 (AHTQSPGRASSYSY). Positions 677 to 687 (GKTEEEKEKDP) are enriched in basic and acidic residues. 4 consecutive CCHHC-type zinc fingers follow at residues 715–758 (RDLK…LKSL), 759–802 (MAAN…GVKM), 807–850 (EEKE…QKEN), and 860–903 (KLNK…IKKG). Zn(2+) is bound by residues Cys724, Cys729, His742, Cys748, Cys768, Cys773, His786, Cys792, Cys816, Cys821, His834, Cys840, Cys869, Cys874, His887, and Cys893. Positions 920 to 992 (IESDEEIRHL…AGLSQALISS (73 aa)) form a coiled coil.

It belongs to the MYT1 family. In terms of tissue distribution, detected at low levels in heart, liver, kidney, skeletal muscle, pancreas, testis, ovary and prostate. Detected at even lower levels in mammary epithelial cells and breast cancer cells.

It is found in the nucleus. Repressor that binds to DNA sequences containing a bipartite element consisting of a direct repeat of the sequence 5'-AAAGTTT-3' separated by 2-9 nucleotides. Represses basal transcription activity from target promoters. Inhibits colony formation in cultured breast cancer cells. This is Suppression of tumorigenicity 18 protein (ST18) from Homo sapiens (Human).